A 160-amino-acid chain; its full sequence is Ribosomal RNA large subunit methyltransferase H (160 aa).

Residues leucine 76 and glycine 108 each contribute to the S-adenosyl-L-methionine site.

Belongs to the RNA methyltransferase RlmH family. As to quaternary structure, homodimer.

Its subcellular location is the cytoplasm. It carries out the reaction pseudouridine(1915) in 23S rRNA + S-adenosyl-L-methionine = N(3)-methylpseudouridine(1915) in 23S rRNA + S-adenosyl-L-homocysteine + H(+). In terms of biological role, specifically methylates the pseudouridine at position 1915 (m3Psi1915) in 23S rRNA. The chain is Ribosomal RNA large subunit methyltransferase H from Nitrobacter hamburgensis (strain DSM 10229 / NCIMB 13809 / X14).